The sequence spans 183 residues: MHLLPELASHHAVSIPELLVSRDERQARQHAWLKHHPVPLVSFTVVAPGPIKDSEVTRRIFNHRVTALRALATKQGWQIQEQAALVSASGPEGMLSIAAPARDLKLATIELEHSHPLGRLWDIDVLTPEGEILSRRDYSLPPRRCLLCEQSAAVCARGKTHQLTDLLNRMEALLNDVDACNVN.

This sequence belongs to the CitX family.

It catalyses the reaction apo-[citrate lyase ACP] + 2'-(5''-triphospho-alpha-D-ribosyl)-3'-dephospho-CoA = holo-[citrate lyase ACP] + diphosphate. Transfers 2-(5''-triphosphoribosyl)-3'-dephosphocoenzyme-A on a serine residue to the apo-acyl carrier protein (gamma chain) of the citrate lyase to yield holo-acyl carrier protein. The chain is Apo-citrate lyase phosphoribosyl-dephospho-CoA transferase from Shigella flexneri serotype 5b (strain 8401).